We begin with the raw amino-acid sequence, 373 residues long: Exonuclease V (373 aa).

Position 92 (Cys92) interacts with [4Fe-4S] cluster. Mg(2+) contacts are provided by Asp182 and Glu196. The [4Fe-4S] cluster site is built by Cys343, Cys346, and Cys352.

It belongs to the EXO5 family. In terms of assembly, monomer; monomeric form has weak exonuclease activity. Homodimer; homodimeric form is unsure but has much higher exonuclease activity, suggesting that it could homodimerize upon DNA-binding. Interacts with the replication protein A (RPA) complex. [4Fe-4S] cluster serves as cofactor. The cofactor is Mg(2+).

It is found in the nucleus. The protein localises to the cytoplasm. It localises to the cytosol. In terms of biological role, single-stranded DNA (ssDNA) bidirectional exonuclease involved in DNA repair. Probably involved in DNA repair following ultraviolet (UV) irradiation and interstrand cross-links (ICLs) damage. Has both 5'-3' and 3'-5' exonuclease activities with a strong preference for 5'-ends. Acts as a sliding exonuclease that loads at ssDNA ends and then slides along the ssDNA prior to cutting; however the sliding and the 3'-5' exonuclease activities are abolished upon binding to the replication protein A (RPA) complex that enforces 5'-directionality activity. This is Exonuclease V (EXO5) from Homo sapiens (Human).